The following is an 84-amino-acid chain: ATP synthase subunit c (84 aa).

The next 2 membrane-spanning stretches (helical) occupy residues 13–33 (IAVG…WGLI) and 56–76 (FIFA…GFWF).

Belongs to the ATPase C chain family. F-type ATPases have 2 components, F(1) - the catalytic core - and F(0) - the membrane proton channel. F(1) has five subunits: alpha(3), beta(3), gamma(1), delta(1), epsilon(1). F(0) has three main subunits: a(1), b(2) and c(10-14). The alpha and beta chains form an alternating ring which encloses part of the gamma chain. F(1) is attached to F(0) by a central stalk formed by the gamma and epsilon chains, while a peripheral stalk is formed by the delta and b chains.

The protein localises to the cell inner membrane. Functionally, f(1)F(0) ATP synthase produces ATP from ADP in the presence of a proton or sodium gradient. F-type ATPases consist of two structural domains, F(1) containing the extramembraneous catalytic core and F(0) containing the membrane proton channel, linked together by a central stalk and a peripheral stalk. During catalysis, ATP synthesis in the catalytic domain of F(1) is coupled via a rotary mechanism of the central stalk subunits to proton translocation. Its function is as follows. Key component of the F(0) channel; it plays a direct role in translocation across the membrane. A homomeric c-ring of between 10-14 subunits forms the central stalk rotor element with the F(1) delta and epsilon subunits. This Acidithiobacillus ferrooxidans (strain ATCC 23270 / DSM 14882 / CIP 104768 / NCIMB 8455) (Ferrobacillus ferrooxidans (strain ATCC 23270)) protein is ATP synthase subunit c.